The following is a 193-amino-acid chain: Holliday junction branch migration complex subunit RuvA (193 aa).

The domain I stretch occupies residues methionine 1–glycine 64. A domain II region spans residues threonine 65–proline 143. The tract at residues alanine 144 to aspartate 151 is flexible linker. The tract at residues aspartate 151–glycine 193 is domain III.

Belongs to the RuvA family. Homotetramer. Forms an RuvA(8)-RuvB(12)-Holliday junction (HJ) complex. HJ DNA is sandwiched between 2 RuvA tetramers; dsDNA enters through RuvA and exits via RuvB. An RuvB hexamer assembles on each DNA strand where it exits the tetramer. Each RuvB hexamer is contacted by two RuvA subunits (via domain III) on 2 adjacent RuvB subunits; this complex drives branch migration. In the full resolvosome a probable DNA-RuvA(4)-RuvB(12)-RuvC(2) complex forms which resolves the HJ.

The protein resides in the cytoplasm. The RuvA-RuvB-RuvC complex processes Holliday junction (HJ) DNA during genetic recombination and DNA repair, while the RuvA-RuvB complex plays an important role in the rescue of blocked DNA replication forks via replication fork reversal (RFR). RuvA specifically binds to HJ cruciform DNA, conferring on it an open structure. The RuvB hexamer acts as an ATP-dependent pump, pulling dsDNA into and through the RuvAB complex. HJ branch migration allows RuvC to scan DNA until it finds its consensus sequence, where it cleaves and resolves the cruciform DNA. This Ralstonia nicotianae (strain ATCC BAA-1114 / GMI1000) (Ralstonia solanacearum) protein is Holliday junction branch migration complex subunit RuvA.